Here is a 925-residue protein sequence, read N- to C-terminus: Bifunctional uridylyltransferase/uridylyl-removing enzyme (925 aa).

Positions 1-382 (MVLPTTKDAT…PPGAEVRRVP (382 aa)) are uridylyltransferase. The tract at residues 383–738 (DSDDFIIDNN…VGFDEARGVT (356 aa)) is uridylyl-removing. Residues 498 to 621 (VDEHLIRCIG…VQSVERMKLL (124 aa)) form the HD domain. 2 consecutive ACT domains span residues 739–820 (ELTI…DVMP) and 849–925 (MIEV…NTAE).

This sequence belongs to the GlnD family. Mg(2+) is required as a cofactor.

The enzyme catalyses [protein-PII]-L-tyrosine + UTP = [protein-PII]-uridylyl-L-tyrosine + diphosphate. It catalyses the reaction [protein-PII]-uridylyl-L-tyrosine + H2O = [protein-PII]-L-tyrosine + UMP + H(+). With respect to regulation, uridylyltransferase (UTase) activity is inhibited by glutamine, while glutamine activates uridylyl-removing (UR) activity. Its function is as follows. Modifies, by uridylylation and deuridylylation, the PII regulatory proteins (GlnB and homologs), in response to the nitrogen status of the cell that GlnD senses through the glutamine level. Under low glutamine levels, catalyzes the conversion of the PII proteins and UTP to PII-UMP and PPi, while under higher glutamine levels, GlnD hydrolyzes PII-UMP to PII and UMP (deuridylylation). Thus, controls uridylylation state and activity of the PII proteins, and plays an important role in the regulation of nitrogen assimilation and metabolism. The sequence is that of Bifunctional uridylyltransferase/uridylyl-removing enzyme from Nitrobacter winogradskyi (strain ATCC 25391 / DSM 10237 / CIP 104748 / NCIMB 11846 / Nb-255).